The chain runs to 400 residues: tRNA(Met) cytidine acetate ligase (400 aa).

ATP contacts are provided by residues 7–20 (IVEY…HLYH), G101, N159, and R184.

Belongs to the TmcAL family.

The protein resides in the cytoplasm. It carries out the reaction cytidine(34) in elongator tRNA(Met) + acetate + ATP = N(4)-acetylcytidine(34) in elongator tRNA(Met) + AMP + diphosphate. In terms of biological role, catalyzes the formation of N(4)-acetylcytidine (ac(4)C) at the wobble position of elongator tRNA(Met), using acetate and ATP as substrates. First activates an acetate ion to form acetyladenylate (Ac-AMP) and then transfers the acetyl group to tRNA to form ac(4)C34. The polypeptide is tRNA(Met) cytidine acetate ligase (Caldicellulosiruptor saccharolyticus (strain ATCC 43494 / DSM 8903 / Tp8T 6331)).